The following is a 312-amino-acid chain: DNA-directed RNA polymerase subunit alpha (312 aa).

An alpha N-terminal domain (alpha-NTD) region spans residues 1–226 (MIEFEKPKIT…DHLNLFVDLS (226 aa)). An alpha C-terminal domain (alpha-CTD) region spans residues 243 to 312 (TERVLDKIIE…ELGLSLKKRK (70 aa)).

It belongs to the RNA polymerase alpha chain family. Homodimer. The RNAP catalytic core consists of 2 alpha, 1 beta, 1 beta' and 1 omega subunit. When a sigma factor is associated with the core the holoenzyme is formed, which can initiate transcription.

The catalysed reaction is RNA(n) + a ribonucleoside 5'-triphosphate = RNA(n+1) + diphosphate. Functionally, DNA-dependent RNA polymerase catalyzes the transcription of DNA into RNA using the four ribonucleoside triphosphates as substrates. The sequence is that of DNA-directed RNA polymerase subunit alpha from Lactococcus lactis subsp. lactis (strain IL1403) (Streptococcus lactis).